The primary structure comprises 383 residues: Xylose/arabinose import ATP-binding protein XacK (383 aa).

Residues 4–240 (LTLDDVTKVY…PNNLFVAGFI (237 aa)) enclose the ABC transporter domain. 41–48 (GPSGCGKS) provides a ligand contact to ATP.

Belongs to the ABC transporter superfamily. Carbohydrate uptake transporter-1 (CUT1) (TC 3.A.1.1) family. In terms of assembly, the complex is composed of two ATP-binding proteins (XacJ and XacK), two transmembrane proteins (XacH and XacI) and a solute-binding protein (XacG).

Its subcellular location is the cell membrane. It carries out the reaction D-xylose(out) + ATP + H2O = D-xylose(in) + ADP + phosphate + H(+). It catalyses the reaction L-arabinose(out) + ATP + H2O = L-arabinose(in) + ADP + phosphate + H(+). Part of the ABC transporter complex XacGHIJK involved in the uptake of xylose and arabinose. Responsible for energy coupling to the transport system. The polypeptide is Xylose/arabinose import ATP-binding protein XacK (Haloferax volcanii (strain ATCC 29605 / DSM 3757 / JCM 8879 / NBRC 14742 / NCIMB 2012 / VKM B-1768 / DS2) (Halobacterium volcanii)).